The chain runs to 407 residues: Ornithine cyclodeaminase (407 aa).

Residues asparagine 233, alanine 234, aspartate 312, threonine 344, methionine 345, leucine 346, histidine 347, aspartate 365, aspartate 388, and valine 389 each coordinate NAD(+).

It belongs to the AgrE/ArgZ ornithine cyclodeaminase family. Requires NAD(+) as cofactor.

It carries out the reaction L-ornithine = L-proline + NH4(+). Functionally, catalyzes the conversion of ornithine to proline, with the release of ammonia. This is Ornithine cyclodeaminase from Archaeoglobus fulgidus (strain ATCC 49558 / DSM 4304 / JCM 9628 / NBRC 100126 / VC-16).